We begin with the raw amino-acid sequence, 215 residues long: Large ribosomal subunit protein uL4 (215 aa).

The tract at residues 46–76 (TAKSKNRAEVSGGGRKPWAQKGGGRARAGSI) is disordered. Residues 56–71 (SGGGRKPWAQKGGGRA) are compositionally biased toward gly residues.

Belongs to the universal ribosomal protein uL4 family. As to quaternary structure, part of the 50S ribosomal subunit.

Its function is as follows. One of the primary rRNA binding proteins, this protein initially binds near the 5'-end of the 23S rRNA. It is important during the early stages of 50S assembly. It makes multiple contacts with different domains of the 23S rRNA in the assembled 50S subunit and ribosome. In terms of biological role, forms part of the polypeptide exit tunnel. The chain is Large ribosomal subunit protein uL4 from Helicobacter pylori (strain HPAG1).